Here is a 506-residue protein sequence, read N- to C-terminus: Maturase K (506 aa).

This sequence belongs to the intron maturase 2 family. MatK subfamily.

It localises to the plastid. It is found in the chloroplast. In terms of biological role, usually encoded in the trnK tRNA gene intron. Probably assists in splicing its own and other chloroplast group II introns. This chain is Maturase K, found in Trifolium spumosum (Mediterranean clover).